The primary structure comprises 713 residues: NAD(+) hydrolase SARM1 (713 aa).

The ARM 1 repeat unit spans residues Asp-53–Glu-96. NAD(+)-binding positions include Trp-99, Arg-106, Glu-145–Arg-153, and His-186–Lys-189. ARM repeat units follow at residues Glu-110–Val-149, Glu-151–Lys-189, Glu-192–Met-231, Gly-233–Asn-276, Arg-277–Asp-310, Ser-311–Ser-350, and Gln-355–Pro-398. SAM domains are found at residues Trp-408–Tyr-472 and Cys-478–Ala-537. One can recognise a TIR domain in the interval Lys-552–Pro-695. NAD(+) is bound by residues Arg-561 to Arg-562 and Glu-591. Residue Glu-634 is part of the active site.

The protein belongs to the SARM1 family. As to quaternary structure, homooctamer; forms an octameric ring via SAM domains.

It is found in the cytoplasm. Its subcellular location is the cell projection. It localises to the axon. The protein localises to the dendrite. The protein resides in the synapse. It is found in the mitochondrion. It catalyses the reaction NAD(+) + H2O = ADP-D-ribose + nicotinamide + H(+). It carries out the reaction NAD(+) = cyclic ADP-beta-D-ribose + nicotinamide + H(+). The enzyme catalyses NADP(+) + H2O = ADP-D-ribose 2'-phosphate + nicotinamide + H(+). With respect to regulation, autoinhibited: in the inactive state, the enzymatic TIR domain is held apart by the autoinhibiting ARM repeats. NAD(+)-binding to ARM repeats maintains an inactive state by promoting interaction between ARM repeats and the TIR domain, thereby facilitating inhibition of the enzymatic TIR domain. Following activation, possibly by nicotinamide mononucleotide (NMN), auto-inhibitory interactions are released, allowing self-association of the TIR domains and subsequent activation of the NAD(+) hydrolase (NADase) activity. Self-association of TIR domains is facilitated by the octamer of SAM domains. Its function is as follows. NAD(+) hydrolase, which plays a key role in axonal degeneration following injury by regulating NAD(+) metabolism. Acts as a negative regulator of MYD88- and TRIF-dependent toll-like receptor signaling pathway by promoting Wallerian degeneration, an injury-induced form of programmed subcellular death which involves degeneration of an axon distal to the injury site. Wallerian degeneration is triggerred by NAD(+) depletion: in response to injury, SARM1 is activated and catalyzes cleavage of NAD(+) into ADP-D-ribose (ADPR), cyclic ADPR (cADPR) and nicotinamide; NAD(+) cleavage promoting cytoskeletal degradation and axon destruction. Also able to hydrolyze NADP(+), but not other NAD(+)-related molecules. Can activate neuronal cell death in response to stress. The protein is NAD(+) hydrolase SARM1 of Danio rerio (Zebrafish).